The following is a 334-amino-acid chain: Leucine-rich repeat-containing protein 39 (334 aa).

10 LRR repeats span residues 59-82 (EDGR…LLKL), 83-105 (NQLQ…IGRF), 106-128 (QHLI…IGLL), 129-151 (TRLQ…LSNC), 153-175 (SLEK…LSKL), 176-198 (LKLT…VLDM), 199-221 (PALE…LDRM), 223-244 (SLHT…IRNM), 245-269 (KNLG…EMTS), and 272-295 (FVNF…VDGE).

Interacts with MYH7 (via C-terminus). Expressed in heart and skeletal muscle (at protein level). Also detected in kidney (at protein level). Not detected in other tissues tested (at protein level).

It is found in the cytoplasm. The protein resides in the myofibril. Its subcellular location is the sarcomere. It localises to the m line. Component of the sarcomeric M-band which plays a role in myocyte response to biomechanical stress. May regulate expression of other M-band proteins via an SRF-dependent pathway. Important for normal contractile function in heart. The protein is Leucine-rich repeat-containing protein 39 of Rattus norvegicus (Rat).